The sequence spans 285 residues: Cell division protein DivIB (285 aa).

Positions 1-19 are enriched in basic and acidic residues; sequence MNEKNKNDESKHQEDKLQD. Residues 1–20 are disordered; the sequence is MNEKNKNDESKHQEDKLQDQ. At 1-66 the chain is on the cytoplasmic side; that stretch reads MNEKNKNDES…NRFNAMERNS (66 aa). The chain crosses the membrane as a helical span at residues 67 to 87; it reads IHMIVILSIISLLLILLLSPL. The region spanning 88–158 is the POTRA domain; that stretch reads MRFQKVEITG…QVAQIKIEEN (71 aa). The Extracellular portion of the chain corresponds to 88 to 285; that stretch reads MRFQKVEITG…FQVGTYFQQY (198 aa).

Belongs to the FtsQ/DivIB family. DivIB subfamily.

It localises to the cell membrane. Its function is as follows. Cell division protein that may be involved in stabilizing or promoting the assembly of the division complex. This Weissella koreensis (strain KACC 15510) protein is Cell division protein DivIB.